The sequence spans 507 residues: Histidine ammonia-lyase (507 aa).

A cross-link (5-imidazolinone (Ala-Gly)) is located at residues 141–143 (ASG). S142 carries the post-translational modification 2,3-didehydroalanine (Ser).

The protein belongs to the PAL/histidase family. In terms of processing, contains an active site 4-methylidene-imidazol-5-one (MIO), which is formed autocatalytically by cyclization and dehydration of residues Ala-Ser-Gly.

It localises to the cytoplasm. It carries out the reaction L-histidine = trans-urocanate + NH4(+). The protein operates within amino-acid degradation; L-histidine degradation into L-glutamate; N-formimidoyl-L-glutamate from L-histidine: step 1/3. This is Histidine ammonia-lyase from Burkholderia lata (strain ATCC 17760 / DSM 23089 / LMG 22485 / NCIMB 9086 / R18194 / 383).